Here is a 570-residue protein sequence, read N- to C-terminus: Dwarfin sma-4 (570 aa).

The interval 115–134 (SSQASSQPPPTPTVNPTPIP) is disordered. Pro residues predominate over residues 121-134 (QPPPTPTVNPTPIP). The MH1 domain maps to 150-273 (QISHVLQCYQ…YERVVSNRIT (124 aa)). The Zn(2+) site is built by cysteine 203, cysteine 247, cysteine 258, and histidine 263. The 221-residue stretch at 350–570 (WCSIIYYELD…LKNSSQFGSS (221 aa)) folds into the MH2 domain.

Belongs to the dwarfin/SMAD family.

It is found in the cytoplasm. It localises to the nucleus. Its function is as follows. Involved in TGF-beta pathway. The polypeptide is Dwarfin sma-4 (sma-4) (Caenorhabditis elegans).